Here is a 137-residue protein sequence, read N- to C-terminus: uncharacterized protein (137 aa).

In terms of domain architecture, HTH merR-type spans 4–73; that stretch reads MLTVSEVARK…LEEIADILHL (70 aa). Positions 8-27 form a DNA-binding region, H-T-H motif; it reads SEVARKLGLNPQTLYFYERI.

This is an uncharacterized protein from Synechocystis sp. (strain ATCC 27184 / PCC 6803 / Kazusa).